Reading from the N-terminus, the 71-residue chain is Small ribosomal subunit protein bS21 (71 aa).

It belongs to the bacterial ribosomal protein bS21 family.

The sequence is that of Small ribosomal subunit protein bS21 from Shewanella piezotolerans (strain WP3 / JCM 13877).